Here is a 253-residue protein sequence, read N- to C-terminus: HTH-type transcriptional activator TipA (253 aa).

The 71-residue stretch at 1–71 (MSYSVGQVAG…LDEVAALLDD (71 aa)) folds into the HTH merR-type domain. A DNA-binding region (H-T-H motif) is located at residues 5 to 24 (VGQVAGFAGVTVRTLHHYDD).

As to quaternary structure, homodimer.

In terms of biological role, transcriptional activator. Is activated when bound to the antibiotic thiostrepton. The protein is HTH-type transcriptional activator TipA (tipA) of Streptomyces coelicolor (strain ATCC BAA-471 / A3(2) / M145).